Reading from the N-terminus, the 258-residue chain is Type II restriction enzyme HindII (258 aa).

It catalyses the reaction Endonucleolytic cleavage of DNA to give specific double-stranded fragments with terminal 5'-phosphates.. In terms of biological role, a P subtype restriction enzyme that recognizes the double-stranded sequence 5'-GTYRAC-3' and cleaves after Y-3. The sequence is that of Type II restriction enzyme HindII (hindIIR) from Haemophilus influenzae (strain ATCC 51907 / DSM 11121 / KW20 / Rd).